The sequence spans 257 residues: Mating-type protein A2 (257 aa).

A DNA-binding region (HMG box) is located at residues 58–132 (YTRPRNQFVL…EENWHKYTHY (75 aa)). A disordered region spans residues 210 to 239 (QPKTKMNSNLSKLRFKSKQPPTPPEENSNV).

This sequence belongs to the MATA2 family.

The protein resides in the nucleus. Its function is as follows. Mating type proteins are sequence specific DNA-binding proteins that act as master switches in yeast differentiation by controlling gene expression in a cell type-specific fashion. Transcriptional activator that induces the transcription of a-specific genes. This chain is Mating-type protein A2 (MATA2), found in Kluyveromyces lactis (strain ATCC 8585 / CBS 2359 / DSM 70799 / NBRC 1267 / NRRL Y-1140 / WM37) (Yeast).